Consider the following 792-residue polypeptide: Oxidoreductase cns1 (792 aa).

As to quaternary structure, interacts with cns2.

It localises to the lipid droplet. It functions in the pathway secondary metabolite biosynthesis. Oxidoreductase; part of the gene cluster that mediates the biosynthesis of cordycepin (COR) and pentostatin (PTN), two adenosine analogs with related bioactivity profiles as both mimic adenosine and can inhibit some of the processes that are adenosine dependent. Within the pathway, cns1 catalyzes the last step by converting the cns2 product 2'-carbonyl-3'-deoxyadenosine (2'-C-3'-dA) into cordycepin (3'-deoxyadenosine). The first step of cordycepin biosynthesis involves hydroxyl phosphorylation of the 3'-OH position on adenosine to produce adenosine-3'-monophosphate (3'-AMP), catalyzed by kinase activity of cns3. Next, 3'-AMP is dephosphorylated to 2'-carbonyl-3'-deoxyadenosine by cns2, which is finally converted to cordycepin by the oxidoreductase cns1. Pentostatin production is mediated by the ATP phosphoribosyltransferase activity of cns3 on adenosine to inhibit the activity of adenosine deaminase (ADA) to prevent COR deamination to 3'-deoxyinosine (3'-dI). The protein is Oxidoreductase cns1 of Cordyceps militaris (strain CM01) (Caterpillar fungus).